Reading from the N-terminus, the 138-residue chain is Large ribosomal subunit protein uL16 (138 aa).

A compositionally biased stretch (basic residues) spans 1–13; it reads MLQPARRKFRKEQ. Positions 1-22 are disordered; it reads MLQPARRKFRKEQKGRNTGVAT.

This sequence belongs to the universal ribosomal protein uL16 family. In terms of assembly, part of the 50S ribosomal subunit.

Its function is as follows. Binds 23S rRNA and is also seen to make contacts with the A and possibly P site tRNAs. The protein is Large ribosomal subunit protein uL16 of Acidovorax ebreus (strain TPSY) (Diaphorobacter sp. (strain TPSY)).